An 81-amino-acid polypeptide reads, in one-letter code: ATP synthase subunit c, chloroplastic (81 aa).

2 helical membrane passes run 3–23 (PLIS…ASIG) and 57–77 (LAFM…LLFA).

The protein belongs to the ATPase C chain family. In terms of assembly, F-type ATPases have 2 components, F(1) - the catalytic core - and F(0) - the membrane proton channel. F(1) has five subunits: alpha(3), beta(3), gamma(1), delta(1), epsilon(1). F(0) has four main subunits: a(1), b(1), b'(1) and c(10-14). The alpha and beta chains form an alternating ring which encloses part of the gamma chain. F(1) is attached to F(0) by a central stalk formed by the gamma and epsilon chains, while a peripheral stalk is formed by the delta, b and b' chains.

The protein resides in the plastid. It localises to the chloroplast thylakoid membrane. Functionally, f(1)F(0) ATP synthase produces ATP from ADP in the presence of a proton or sodium gradient. F-type ATPases consist of two structural domains, F(1) containing the extramembraneous catalytic core and F(0) containing the membrane proton channel, linked together by a central stalk and a peripheral stalk. During catalysis, ATP synthesis in the catalytic domain of F(1) is coupled via a rotary mechanism of the central stalk subunits to proton translocation. Its function is as follows. Key component of the F(0) channel; it plays a direct role in translocation across the membrane. A homomeric c-ring of between 10-14 subunits forms the central stalk rotor element with the F(1) delta and epsilon subunits. In Acorus calamus var. americanus (American sweet flag), this protein is ATP synthase subunit c, chloroplastic.